The sequence spans 132 residues: Fatty acid-binding protein type 2 (132 aa).

The residue at position 2 (alanine 2) is an N-acetylalanine.

It belongs to the calycin superfamily. Fatty-acid binding protein (FABP) family.

The protein is Fatty acid-binding protein type 2 of Fasciola hepatica (Liver fluke).